Reading from the N-terminus, the 415-residue chain is Serine hydroxymethyltransferase (415 aa).

(6S)-5,6,7,8-tetrahydrofolate is bound by residues L117 and 121–123 (GHL). K225 is subject to N6-(pyridoxal phosphate)lysine. (6S)-5,6,7,8-tetrahydrofolate-binding positions include E241 and 349-351 (SPF).

This sequence belongs to the SHMT family. As to quaternary structure, homodimer. Pyridoxal 5'-phosphate serves as cofactor.

The protein localises to the cytoplasm. The catalysed reaction is (6R)-5,10-methylene-5,6,7,8-tetrahydrofolate + glycine + H2O = (6S)-5,6,7,8-tetrahydrofolate + L-serine. Its pathway is one-carbon metabolism; tetrahydrofolate interconversion. It functions in the pathway amino-acid biosynthesis; glycine biosynthesis; glycine from L-serine: step 1/1. Functionally, catalyzes the reversible interconversion of serine and glycine with tetrahydrofolate (THF) serving as the one-carbon carrier. This reaction serves as the major source of one-carbon groups required for the biosynthesis of purines, thymidylate, methionine, and other important biomolecules. Also exhibits THF-independent aldolase activity toward beta-hydroxyamino acids, producing glycine and aldehydes, via a retro-aldol mechanism. The protein is Serine hydroxymethyltransferase of Campylobacter hominis (strain ATCC BAA-381 / DSM 21671 / CCUG 45161 / LMG 19568 / NCTC 13146 / CH001A).